The following is a 319-amino-acid chain: tRNA uridine(34) hydroxylase (319 aa).

Residues 133-231 (EDPDSVVIDT…YLEDVSSENS (99 aa)) form the Rhodanese domain. C191 (cysteine persulfide intermediate) is an active-site residue.

Belongs to the TrhO family.

It carries out the reaction uridine(34) in tRNA + AH2 + O2 = 5-hydroxyuridine(34) in tRNA + A + H2O. Its function is as follows. Catalyzes oxygen-dependent 5-hydroxyuridine (ho5U) modification at position 34 in tRNAs. This Prochlorococcus marinus (strain NATL1A) protein is tRNA uridine(34) hydroxylase.